A 411-amino-acid polypeptide reads, in one-letter code: SH3 and cysteine-rich domain-containing protein 2 (411 aa).

The segment at 1–29 (MTEMSEKENEPDDAATHSPPGTVSALQET) is disordered. Over residues 19-29 (PPGTVSALQET) the composition is skewed to polar residues. Position 48 is a phosphoserine (Ser-48). Residues 64-95 (TEVLLTPPTPLPPPSPPPTASDRGLATPSPSP) form a disordered region. Residues 70–82 (PPTPLPPPSPPPT) show a composition bias toward pro residues. A Phorbol-ester/DAG-type zinc finger spans residues 110 to 161 (LHSFQEHVFKRASPCELCHQLIVGNSKQGLRCKMCKVSVHLWCSEEISHQQC). 2 disordered regions span residues 174–203 (SSPLLVHEPPPVCATSKESPPTGDSGKVDP) and 219–288 (RSSF…ATLR). Positions 219–232 (RSSFSSTSESPTRS) are enriched in low complexity. 2 SH3 domains span residues 292-351 (GPMY…RVRP) and 354-411 (NVWR…LTEI).

In terms of assembly, interacts (via SH3 domains) with CACNA1S. Interacts (via SH3 domains) with CACNA1C. Has much lower affinity for CACNA1C than for CACNA1S.

Its subcellular location is the cytoplasm. It is found in the cytosol. The protein localises to the cell membrane. The protein resides in the sarcolemma. Plays a redundant role in promoting the expression of calcium channel CACNA1S at the cell membrane, and thereby contributes to increased channel activity. Slows down the inactivation rate of the calcium channel CACNA1C. The chain is SH3 and cysteine-rich domain-containing protein 2 (STAC2) from Homo sapiens (Human).